Reading from the N-terminus, the 610-residue chain is DNA replication regulator sld2 (610 aa).

Over residues Trp-28 to Ile-42 the composition is skewed to basic and acidic residues. Disordered regions lie at residues Trp-28–Glu-115, Ser-127–Val-261, and Glu-338–Arg-610. Composition is skewed to polar residues over residues Glu-86–Tyr-110 and Thr-232–Val-261. 2 stretches are compositionally biased toward acidic residues: residues Val-373 to Ala-386 and Phe-414 to Leu-428. Residues Val-442–Arg-464 are compositionally biased toward basic residues. Positions Ala-470 to His-480 are enriched in acidic residues. Residues Lys-493–Leu-503 are compositionally biased toward basic and acidic residues. Acidic residues predominate over residues Glu-514 to Glu-527. The span at Ser-544 to Lys-573 shows a compositional bias: basic and acidic residues.

This sequence belongs to the SLD2 family.

It localises to the cytoplasm. The protein localises to the nucleus. Its function is as follows. Has a role in the initiation of DNA replication. Required at S-phase checkpoint. This chain is DNA replication regulator sld2 (drc-4), found in Neurospora crassa (strain ATCC 24698 / 74-OR23-1A / CBS 708.71 / DSM 1257 / FGSC 987).